The following is a 378-amino-acid chain: Alcohol dehydrogenase class-3 (378 aa).

N-acetylalanine is present on Ala-1. Cys-46 lines the Zn(2+) pocket. His-47 contributes to the NAD(+) binding site. An alcohol contacts are provided by Thr-48 and His-68. Zn(2+) contacts are provided by His-68, Glu-69, Cys-98, Cys-101, Cys-104, Cys-112, and Cys-176. Residues 201-206 (GLGTVG), Asp-225, Lys-230, 294-296 (VGV), 319-321 (TAF), and Arg-371 each bind NAD(+).

The protein belongs to the zinc-containing alcohol dehydrogenase family. Class-III subfamily. As to quaternary structure, homodimer. Zn(2+) serves as cofactor.

The protein resides in the cytoplasm. It carries out the reaction a primary alcohol + NAD(+) = an aldehyde + NADH + H(+). The catalysed reaction is a secondary alcohol + NAD(+) = a ketone + NADH + H(+). It catalyses the reaction S-(hydroxymethyl)glutathione + NADP(+) = S-formylglutathione + NADPH + H(+). The enzyme catalyses S-(hydroxymethyl)glutathione + NAD(+) = S-formylglutathione + NADH + H(+). Functionally, class-III ADH is remarkably ineffective in oxidizing ethanol, but it readily catalyzes the oxidation of long-chain primary alcohols and the oxidation of S-(hydroxymethyl) glutathione. The polypeptide is Alcohol dehydrogenase class-3 (Pisum sativum (Garden pea)).